Consider the following 93-residue polypeptide: Alpha-defensin 23 (93 aa).

A signal peptide spans 1–19 (MKTLVLLSALILLAFQVQA). The propeptide occupies 20-58 (DPIQNTDEETKTEEQPGKEDQAVSVSFGDPEGSSLQEES). Residues 24 to 54 (NTDEETKTEEQPGKEDQAVSVSFGDPEGSSL) form a disordered region. Over residues 27–40 (EETKTEEQPGKEDQ) the composition is skewed to basic and acidic residues. Intrachain disulfides connect Cys-64–Cys-92, Cys-66–Cys-81, and Cys-71–Cys-91.

It belongs to the alpha-defensin family.

The protein localises to the secreted. In terms of biological role, may have microbicidal activities. This Mus musculus (Mouse) protein is Alpha-defensin 23 (Defa23).